The following is a 384-amino-acid chain: Putative dioxygenase SSO1533 (384 aa).

Residues His296, Glu302, and His332 each coordinate Fe cation.

It belongs to the homogentisate dioxygenase family. Fe cation serves as cofactor.

This is Putative dioxygenase SSO1533 from Saccharolobus solfataricus (strain ATCC 35092 / DSM 1617 / JCM 11322 / P2) (Sulfolobus solfataricus).